A 249-amino-acid chain; its full sequence is Phosphoribosylaminoimidazole-succinocarboxamide synthase (249 aa).

Belongs to the SAICAR synthetase family.

The catalysed reaction is 5-amino-1-(5-phospho-D-ribosyl)imidazole-4-carboxylate + L-aspartate + ATP = (2S)-2-[5-amino-1-(5-phospho-beta-D-ribosyl)imidazole-4-carboxamido]succinate + ADP + phosphate + 2 H(+). It participates in purine metabolism; IMP biosynthesis via de novo pathway; 5-amino-1-(5-phospho-D-ribosyl)imidazole-4-carboxamide from 5-amino-1-(5-phospho-D-ribosyl)imidazole-4-carboxylate: step 1/2. This is Phosphoribosylaminoimidazole-succinocarboxamide synthase from Roseiflexus sp. (strain RS-1).